A 421-amino-acid chain; its full sequence is Gamma-glutamyl phosphate reductase (421 aa).

This sequence belongs to the gamma-glutamyl phosphate reductase family.

Its subcellular location is the cytoplasm. It carries out the reaction L-glutamate 5-semialdehyde + phosphate + NADP(+) = L-glutamyl 5-phosphate + NADPH + H(+). It participates in amino-acid biosynthesis; L-proline biosynthesis; L-glutamate 5-semialdehyde from L-glutamate: step 2/2. Catalyzes the NADPH-dependent reduction of L-glutamate 5-phosphate into L-glutamate 5-semialdehyde and phosphate. The product spontaneously undergoes cyclization to form 1-pyrroline-5-carboxylate. The sequence is that of Gamma-glutamyl phosphate reductase from Acinetobacter baumannii (strain SDF).